Here is a 203-residue protein sequence, read N- to C-terminus: FMN-dependent NADH:quinone oxidoreductase 3 (203 aa).

Residues S9, 15 to 17 (SAS), 95 to 98 (MYNF), and 139 to 142 (TAGG) each bind FMN.

The protein belongs to the azoreductase type 1 family. In terms of assembly, homodimer. Requires FMN as cofactor.

The catalysed reaction is 2 a quinone + NADH + H(+) = 2 a 1,4-benzosemiquinone + NAD(+). The enzyme catalyses N,N-dimethyl-1,4-phenylenediamine + anthranilate + 2 NAD(+) = 2-(4-dimethylaminophenyl)diazenylbenzoate + 2 NADH + 2 H(+). Its function is as follows. Quinone reductase that provides resistance to thiol-specific stress caused by electrophilic quinones. Also exhibits azoreductase activity. Catalyzes the reductive cleavage of the azo bond in aromatic azo compounds to the corresponding amines. The polypeptide is FMN-dependent NADH:quinone oxidoreductase 3 (Pseudomonas fluorescens (strain Pf0-1)).